A 130-amino-acid chain; its full sequence is Profilin-12 (130 aa).

Cysteines 13 and 115 form a disulfide. Residues 81–97 carry the Involved in PIP2 interaction motif; that stretch reads AVIRGKKGSGGITVKKT. The residue at position 111 (T111) is a Phosphothreonine.

It belongs to the profilin family. In terms of assembly, occurs in many kinds of cells as a complex with monomeric actin in a 1:1 ratio. In terms of processing, phosphorylated by MAP kinases.

The protein localises to the cytoplasm. Its subcellular location is the cytoskeleton. Its function is as follows. Binds to actin and affects the structure of the cytoskeleton. At high concentrations, profilin prevents the polymerization of actin, whereas it enhances it at low concentrations. This chain is Profilin-12, found in Zea mays (Maize).